We begin with the raw amino-acid sequence, 175 residues long: Sec-independent protein translocase protein TatB (175 aa).

A helical transmembrane segment spans residues 1 to 21; sequence MLDLGLSKMALIGVVALVVLG. The segment covering 96–115 has biased composition (low complexity); that stretch reads VSPGGSAAADAPDGPSAASG. Disordered stretches follow at residues 96–119 and 152–175; these read VSPGGSAAADAPDGPSAASGEPSW and QVQSGAARVARHRPASLRRPARFL. A compositionally biased stretch (basic residues) spans 160–175; that stretch reads VARHRPASLRRPARFL.

The protein belongs to the TatB family. In terms of assembly, the Tat system comprises two distinct complexes: a TatABC complex, containing multiple copies of TatA, TatB and TatC subunits, and a separate TatA complex, containing only TatA subunits. Substrates initially bind to the TatABC complex, which probably triggers association of the separate TatA complex to form the active translocon.

The protein resides in the cell inner membrane. Part of the twin-arginine translocation (Tat) system that transports large folded proteins containing a characteristic twin-arginine motif in their signal peptide across membranes. Together with TatC, TatB is part of a receptor directly interacting with Tat signal peptides. TatB may form an oligomeric binding site that transiently accommodates folded Tat precursor proteins before their translocation. In Burkholderia pseudomallei (strain 1710b), this protein is Sec-independent protein translocase protein TatB.